A 448-amino-acid polypeptide reads, in one-letter code: Probable glycine dehydrogenase (decarboxylating) subunit 1 (448 aa).

The protein belongs to the GcvP family. N-terminal subunit subfamily. The glycine cleavage system is composed of four proteins: P, T, L and H. In this organism, the P 'protein' is a heterodimer of two subunits.

It carries out the reaction N(6)-[(R)-lipoyl]-L-lysyl-[glycine-cleavage complex H protein] + glycine + H(+) = N(6)-[(R)-S(8)-aminomethyldihydrolipoyl]-L-lysyl-[glycine-cleavage complex H protein] + CO2. In terms of biological role, the glycine cleavage system catalyzes the degradation of glycine. The P protein binds the alpha-amino group of glycine through its pyridoxal phosphate cofactor; CO(2) is released and the remaining methylamine moiety is then transferred to the lipoamide cofactor of the H protein. In Staphylococcus epidermidis (strain ATCC 35984 / DSM 28319 / BCRC 17069 / CCUG 31568 / BM 3577 / RP62A), this protein is Probable glycine dehydrogenase (decarboxylating) subunit 1.